A 370-amino-acid chain; its full sequence is ADP-ribosylation factor-like protein 13B (370 aa).

S-palmitoyl cysteine attachment occurs at residues Cys-12, Cys-13, Cys-14, and Cys-15. GTP contacts are provided by residues 31–38 (GIGSAGKT), 75–79 (DVGGD), and 134–137 (NNQN). Lys-239 participates in a covalent cross-link: Glycyl lysine isopeptide (Lys-Gly) (interchain with G-Cter in SUMO). The segment at 255–331 (RNQPPVQPPI…PVSPESNSVK (77 aa)) is disordered. Pro residues predominate over residues 259-271 (PVQPPIPPDPPSD). Composition is skewed to polar residues over residues 287 to 303 (LASS…TPET) and 314 to 328 (RISQ…PESN). Residue Lys-331 forms a Glycyl lysine isopeptide (Lys-Gly) (interchain with G-Cter in SUMO) linkage. The RVVP region stretch occupies residues 366-369 (RVVP).

It belongs to the small GTPase superfamily. Arf family. As to quaternary structure, monomer. In terms of processing, sumoylation regulates the targeting of membrane sensory receptors to the cilium. Specifically expressed in ciliated sensory neurons throughout development in both hermaphrodites.

The protein localises to the cell projection. It is found in the cilium membrane. Cilium-specific protein required to control the microtubule-based, ciliary axoneme structure. Required for normal sensory cilium function. May act by maintaining the association between IFT subcomplexes A and B. In Caenorhabditis elegans, this protein is ADP-ribosylation factor-like protein 13B (arl-13).